The chain runs to 485 residues: Sphingosine kinase 1 (485 aa).

The 143-residue stretch at 116–258 (GRPKKLLVFV…LDVATISQGT (143 aa)) folds into the DAGKc domain. ATP contacts are provided by residues 126-128 (NPF) and T158. A substrate-binding site is contributed by 183–186 (SGDG). D185 serves as the catalytic Proton donor/acceptor. Residues E190 and 215–217 (GSG) each bind ATP. Residue D276 coordinates substrate. ATP-binding positions include R283, R289, and 446-448 (DGE).

Mg(2+) serves as cofactor. In terms of tissue distribution, highly expressed in stems and flowers and at lower levels in roots, leaves and siliques.

It localises to the vacuole membrane. The catalysed reaction is a sphingoid base + ATP = a sphingoid 1-phosphate + ADP + H(+). Its activity is regulated as follows. Activated by phosphatidic acid (PA). Binding with PA stimulates the activity by promoting the binding of substrate to the catalytic site. Its function is as follows. Involved in the production of sphingolipid metabolites. Phosphorylates sphingosine and various sphingoid long-chain base (LCB) products, such as phytosphingosine (PHS, 4-hydroxysphinganine), 4-hydroxy-8-sphingenine, 4,8-sphingadienine, D-erythro-dihydrosphingosine and D,L-threo-dihydrosphingosine. Is required for abscisic acid (ABA) signaling that mediates stomatal closure, inhibition of seed germination and root elongation. May function upstream of PLDALPHA1 and phosphatidic acid (PA) in an amplification response to ABA that mediates stomatal closure. This chain is Sphingosine kinase 1 (SPHK1), found in Arabidopsis thaliana (Mouse-ear cress).